Here is a 500-residue protein sequence, read N- to C-terminus: MSKAAGGSAPAAESCPSAPAGASTPTGVDDLSKVTDEELLQWSKEELIRSLRRAEAEKVSAMLDHSNLIREVNRRLQLHLGEIRGLKDINQKLQEDNQELRDLCCFLDDDRQKGKRVSREWQRLGRYTAGVMHKEVALYLQKLKELEVKQEEVVKENMELKELCMLLDEEKGVGCAGSRCSIDSQASLCQLVASATPYVRDVGDGSSTSSTGSTDSPDHHKHHASGGSPEHLQKPRSEGSPEHTKHRSTSPEHLHKPRASGTPDHSKALKGPSPEHHKPLCKGSPEQQRHPHPGSSPEVLPKHVLSGSPEHFQKHRPGGSPEHTRHSGGSPEHLQKHALGGSLEHLPRARGTSPEHLKQHYGASPDHKHASGSGGSGGGSREGTLRRPAQEDSSSHHRNVYSGMNESTLSYVRQLEARVRQLEEENRMLPQGSFRLSSGADGNNSSLNSPASFSGHTTPSQQPEPVVHSLKVVWRKLGDAAGSCPGIRQHLSGNQYKGPM.

Residues 1 to 23 (MSKAAGGSAPAAESCPSAPAGAS) show a composition bias toward low complexity. Residues 1–30 (MSKAAGGSAPAAESCPSAPAGASTPTGVDD) form a disordered region. Coiled coils occupy residues 38 to 104 (ELLQ…RDLC) and 132 to 171 (MHKEVALYLQKLKELEVKQEEVVKENMELKELCMLLDEEK). 2 disordered regions span residues 200-405 (RDVG…SGMN) and 426-465 (NRMLPQGSFRLSSGADGNNSSLNSPASFSGHTTPSQQPEP). A compositionally biased stretch (low complexity) spans 204-215 (DGSSTSSTGSTD). Over residues 231–254 (HLQKPRSEGSPEHTKHRSTSPEHL) the composition is skewed to basic and acidic residues. Gly residues predominate over residues 372-381 (GSGGSGGGSR). The segment covering 383-395 (GTLRRPAQEDSSS) has biased composition (basic and acidic residues). A coiled-coil region spans residues 404–429 (MNESTLSYVRQLEARVRQLEEENRML). Residues 434–463 (FRLSSGADGNNSSLNSPASFSGHTTPSQQP) show a composition bias toward polar residues. The residue at position 488 (arginine 488) is an Asymmetric dimethylarginine.

This sequence belongs to the CCDC85 family. As to quaternary structure, may interact with ARVCF; CTNND1; CTNND2 and PKP4.

The protein resides in the cell junction. Its subcellular location is the adherens junction. In terms of biological role, may play a role in cell-cell adhesion and epithelium development through its interaction with proteins of the beta-catenin family. The chain is Coiled-coil domain-containing protein 85A (Ccdc85a) from Mus musculus (Mouse).